We begin with the raw amino-acid sequence, 556 residues long: Serine/threonine-protein kinase PksC (556 aa).

The Protein kinase domain maps to 20–287; it reads YQLRDLLGEG…SAEAMRDECL (268 aa). ATP is bound by residues 26-34 and lysine 49; that span reads LGEGGMASV. Aspartate 151 acts as the Proton acceptor in catalysis. Disordered stretches follow at residues 300–403 and 435–485; these read IVPG…PGGK and EDPE…DPDK. The span at 336 to 348 shows a compositional bias: pro residues; the sequence is QPTPSPGPNPYGT. Low complexity-rich tracts occupy residues 360–381 and 445–458; these read YPQQ…QAAA and STAS…KAAG. The segment covering 461 to 475 has biased composition (basic and acidic residues); sequence GPDKEKTIEKDKCTE. The PASTA domain maps to 482 to 550; sequence DPDKIQVPDF…MPEIQLKVST (69 aa).

The protein belongs to the protein kinase superfamily. Ser/Thr protein kinase family.

It catalyses the reaction L-seryl-[protein] + ATP = O-phospho-L-seryl-[protein] + ADP + H(+). It carries out the reaction L-threonyl-[protein] + ATP = O-phospho-L-threonyl-[protein] + ADP + H(+). This chain is Serine/threonine-protein kinase PksC (pksC), found in Streptomyces coelicolor (strain ATCC BAA-471 / A3(2) / M145).